We begin with the raw amino-acid sequence, 601 residues long: Cdc42-interacting protein 4 (601 aa).

The tract at residues 1–117 (MDWGTELWDQ…EMKQERKMHF (117 aa)) is required for translocation to the plasma membrane in response to insulin, podosome formation and interaction with AKAP9 and microtubules. The 264-residue stretch at 1–264 (MDWGTELWDQ…AANAVDPKND (264 aa)) folds into the F-BAR domain. Positions 67–259 (FSQQQSFVQI…EGMKVAANAV (193 aa)) form a coiled coil. 3 disordered regions span residues 280–358 (GDVE…GRDP), 390–420 (DFSH…EVDQ), and 478–543 (NRGD…SPIG). A compositionally biased stretch (polar residues) spans 289-302 (QPMNRAPSDSSLGT). The interval 293–537 (RAPSDSSLGT…TEFDEDFEEE (245 aa)) is interaction with CDC42. The interval 293 to 601 (RAPSDSSLGT…PTSYLRVTLN (309 aa)) is interaction with PDE6G. Phosphoserine is present on residues S296, S298, and S299. The span at 314–329 (GRSRTKRWPFGKKNKP) shows a compositional bias: basic residues. S335 carries the post-translational modification Phosphoserine. Residues 336–346 (PLGGPVPSALP) show a composition bias toward low complexity. S351 carries the phosphoserine modification. Residues 388–481 (TEDFSHLPPE…ESRVLSNRGD (94 aa)) adopt a coiled-coil conformation. Residues 393 to 470 (HLPPEQQRKR…VQKYEAWLAE (78 aa)) form the REM-1 domain. Over residues 407 to 420 (LEERSRELQKEVDQ) the composition is skewed to basic and acidic residues. The interval 471-601 (AESRVLSNRG…PTSYLRVTLN (131 aa)) is required for interaction with FASLG and localization to lysosomes. S482 bears the Phosphoserine mark. The segment at 487 to 541 (ARPPDPPTSAPPDSSSNSASQDTKESSEEPPSEESQDTPIYTEFDEDFEEEPTSP) is interaction with DNM2 and WASL. Low complexity predominate over residues 497-506 (PPDSSSNSAS). The span at 529 to 538 (EFDEDFEEEP) shows a compositional bias: acidic residues. The interval 529-601 (EFDEDFEEEP…PTSYLRVTLN (73 aa)) is interaction with DNM1 and WASL. Positions 538 to 601 (PTSPIGHCVA…PTSYLRVTLN (64 aa)) are required for podosome formation. One can recognise an SH3 domain in the interval 540–601 (SPIGHCVAIY…PTSYLRVTLN (62 aa)). Positions 544–601 (HCVAIYHFEGSSEGTISMAEGEDLSLMEEDKGDGWTRVRRKEGGEGYVPTSYLRVTLN) are interaction with WAS. Residues 546 to 601 (VAIYHFEGSSEGTISMAEGEDLSLMEEDKGDGWTRVRRKEGGEGYVPTSYLRVTLN) are interaction with ARHGAP17, DAAM1, DIAPH1 and DIAPH2.

This sequence belongs to the FNBP1 family. As to quaternary structure, homodimerizes, the dimers can polymerize end-to-end to form filamentous structures. Interacts with AKAP9, ARHGAP17, DAAM1, DIAPH1, DIAPH2, DNM1, FASLG/FASL, GAPVD1, LYN, microtubules, PDE6G, SRC and WAS/WASP. Interacts with the ligand binding domain of the thyroid receptor (TR) in the presence of thyroid hormone. May interact with CTNNB1 and HD/HTT. Interacts specifically with GTP-bound CDC42 and RHOQ. Interacts with DNM2 and WASL. Tyrosine phosphorylated. Also phosphorylated by PKA.

It localises to the cytoplasm. It is found in the cytoskeleton. The protein resides in the cell cortex. The protein localises to the lysosome. Its subcellular location is the golgi apparatus. It localises to the cell membrane. It is found in the cell projection. The protein resides in the phagocytic cup. Functionally, required to coordinate membrane tubulation with reorganization of the actin cytoskeleton during endocytosis. Also acts as a link between CDC42 signaling and regulation of the actin cytoskeleton. Binds to lipids such as phosphatidylinositol 4,5-bisphosphate and phosphatidylserine and promotes membrane invagination and the formation of tubules. Also enhances actin polymerization in the vicinity of membrane tubules by recruiting WASL/N-WASP which in turn activates the Arp2/3 complex. Actin polymerization and dynamin may promote the fission of membrane tubules to form endocytic vesicles. Required for the formation of podosomes, actin-rich adhesion structures specific to monocyte-derived cells. Required for translocation of GLUT4 to the plasma membrane in response to insulin signaling. May be required for the lysosomal retention of FASLG/FASL. In Pongo abelii (Sumatran orangutan), this protein is Cdc42-interacting protein 4 (TRIP10).